The following is a 270-amino-acid chain: NADPH-dependent aldehyde reductase-like protein, chloroplastic (270 aa).

The N-terminal 53 residues, 1–53 (MSTHSSISQPPLPLAGRVAIVTGSSRGIGRAIAIHLAELGARIVINYTSKAAD), are a transit peptide targeting the chloroplast. 26-50 (RGIGRAIAIHLAELGARIVINYTSK) provides a ligand contact to NADP(+). Serine 165 is a substrate binding site. The Proton acceptor role is filled by tyrosine 178.

The protein belongs to the short-chain dehydrogenases/reductases (SDR) family.

It localises to the plastid. The protein localises to the chloroplast. Aldehyde reductase that catalyzes the reduction of the aldehyde carbonyl groups on saturated and alpha,beta-unsaturated aldehydes with more than 5 carbons. This chain is NADPH-dependent aldehyde reductase-like protein, chloroplastic, found in Arabidopsis thaliana (Mouse-ear cress).